Consider the following 415-residue polypeptide: MKILLVGNHTCGNRGDGAILRGIIDSLHLERTDLDIDIISRFPTSSSYLLQQNILPDELFLETKKSNSLVAKVKRRLMPKIMMAHIRGSGFFKNLAVPEYLQQFTDKLKQYDAVIQVGGSFFVDLYGPLQFEHSLCALLAKKPVYMIGHSVGPFQKERFNQIANFVFSRVNSLVLRESVSLEMMEKAGITTQKVIPGADTAFLVRTRTLDAPGHNLIHWQNQIAASKTIAITVRELAPFDKRLGVTQQEYEMAFGKVINAMIERGYQVVALSTCTGIDSYHRDDRMVAITLGDYVQQKDKYRVVMDEFNDLELGILLAGCHLTIGTRLHSAIISMNFGTPAVAINYEHKSLGVMKQLGLPEMASDVQSLMDGSIIAKVNGVLDNYEEIEQQVARAVEQERILGNKITADVLKSIG.

The protein belongs to the polysaccharide pyruvyl transferase family.

It functions in the pathway glycan metabolism; exopolysaccharide biosynthesis. Involved in the biosynthesis of amylovoran which functions as a virulence factor. In Erwinia amylovora (Fire blight bacteria), this protein is Amylovoran biosynthesis protein AmsJ (amsJ).